The primary structure comprises 321 residues: Putative zinc finger CCCH domain-containing protein 9 (321 aa).

Disordered regions lie at residues Met1–Lys59 and Arg181–Glu269. A compositionally biased stretch (basic and acidic residues) spans Glu10 to Lys29. The segment at Arg55–Gln83 adopts a C3H1-type zinc-finger fold. The stretch at Thr164–Arg290 forms a coiled coil. 2 stretches are compositionally biased toward basic and acidic residues: residues Arg181–Gln224 and Arg231–Gln244.

This Arabidopsis thaliana (Mouse-ear cress) protein is Putative zinc finger CCCH domain-containing protein 9.